A 273-amino-acid chain; its full sequence is DnaJ homolog subfamily C member 27 (273 aa).

The required for interaction with MAPK1 stretch occupies residues 1–18; that stretch reads MEANMPKRKEPGRSLRIK. Residues 23–30, 71–75, and 134–137 contribute to the GTP site; these read GNAEVGKS, DMAGH, and NKID. A J domain is found at 217 to 273; the sequence is DSWDMLGVKPGASRDEVNKAYRKLAVLLHPDKCVAPGSEDAFKAVVNARTALLKNIK.

The protein belongs to the small GTPase superfamily. Rab family. As to quaternary structure, interacts directly with MAPK1 (wild-type and kinase-deficient forms). Interacts directly (in GTP-bound form) with MAP2K1 (wild-type and kinase-deficient forms). In terms of tissue distribution, overexpressed in gastrointestinal cancers; expression correlates with later tumor-node-metastasis stages of colorectal cancers.

It is found in the nucleus. Functionally, GTPase which can activate the MEK/ERK pathway and induce cell transformation when overexpressed. May act as a nuclear scaffold for MAPK1, probably by association with MAPK1 nuclear export signal leading to enhanced ERK1/ERK2 signaling. In Homo sapiens (Human), this protein is DnaJ homolog subfamily C member 27 (DNAJC27).